A 104-amino-acid chain; its full sequence is MASIEFSPGIQEVPTQVRVLKSKTGNRGSAIFRFEDLKSDTQNILGMRMIDEEGELTTRNIRAKFLNGEFKALEVTYDMETEAEWDRFLRFMERFSAANQMGMA.

Belongs to the Psb28 family. In terms of assembly, part of the photosystem II complex.

The protein resides in the cellular thylakoid membrane. This is Photosystem II reaction center Psb28 protein from Synechococcus sp. (strain JA-2-3B'a(2-13)) (Cyanobacteria bacterium Yellowstone B-Prime).